Here is a 637-residue protein sequence, read N- to C-terminus: Sodium-dependent phosphate transport protein 2A (637 aa).

The Cytoplasmic segment spans residues 1–103 (MMSYSERLGG…LAQVGTKLLK (103 aa)). 2 positions are modified to phosphoserine: S14 and S34. A helical membrane pass occupies residues 104-125 (VPLMLAFLYLFVCSLDVLSSAF). The Extracellular segment spans residues 126–145 (QLAGGKVAGDIFKDNAILSN). A helical membrane pass occupies residues 146–163 (PVAGLVVGILVTVLVQSS). Over 164–165 (ST) the chain is Cytoplasmic. The helical transmembrane segment at 166-185 (STSIIVSMVSSGLLEVSSAI) threads the bilayer. Residues 186–345 (PIIMGSNIGT…HIFVDTGLPD (160 aa)) lie on the Extracellular side of the membrane. Cystine bridges form between C225–C520 and C306–C334. 2 N-linked (GlcNAc...) asparagine glycosylation sites follow: N298 and N328. The chain crosses the membrane as a helical span at residues 346–368 (LAVGLILLAGSLVVLCTCLILLV). At 369-410 (KMLNSLLKGQVMSSRRSSTQTDFPAPFTWVTGYFAMVVGASM) the chain is on the cytoplasmic side. A helical membrane pass occupies residues 411 to 434 (TFVVQSSSVFTSAITPLIGLGVIS). Over 435–464 (IERAYPLTLGSNIGTTTTAILAALASPREK) the chain is Extracellular. The chain crosses the membrane as a helical span at residues 465–485 (LSSSFQIALCHFFFNISGILL). Topologically, residues 486-511 (WYPLPCTRLPIRMAKALGKRTAKYRW) are cytoplasmic. Residue T506 is modified to Phosphothreonine; by PKC. Residues 512–532 (FAVLYLLVCFLLLPSLVFGIS) form a helical membrane-spanning segment. At 533–537 (MAGWQ) the chain is on the extracellular side. The helical transmembrane segment at 538–559 (AMVGVGTPFGALLAFVVLVNVL) threads the bilayer. At 560–637 (QSRSPGHLPK…LPAHHNATRL (78 aa)) the chain is on the cytoplasmic side. A Phosphoserine modification is found at S605. The residue at position 621 (T621) is a Phosphothreonine. A Phosphoserine modification is found at S623.

The protein belongs to the SLC34A transporter family. In terms of assembly, interacts via its C-terminal region with NHERF4. Interacts with NHERF1. Interacts with TMEM174; regulates SLC34A1 internalization by PTH and FGF23. Kidney.

Its subcellular location is the apical cell membrane. It localises to the cell membrane. It catalyses the reaction 3 Na(+)(out) + phosphate(out) = 3 Na(+)(in) + phosphate(in). Involved in actively transporting phosphate into cells via Na(+) cotransport in the renal brush border membrane. The cotransport has a Na(+):Pi stoichiometry of 3:1 and is electrogenic. The protein is Sodium-dependent phosphate transport protein 2A of Mus musculus (Mouse).